Reading from the N-terminus, the 440-residue chain is MTKKIHINAFEMNCVGHIAHGLWRHPENQRHRYTDLNYWTELAQLLEKGKFDALFLADVVGIYDVYRQSRDTAVREAVQIPVNDPLMLISAMAYVTKHLAFAVTFSTTYEHPYGHARRMSTLDHLTKGRIAWNVVTSHLPSADKNFGIKKILEHDERYDLADEYLEVCYKLWEGSWEDNAVIRDIENNIYTDPSKVHEINHSGKYFEVPGPHLCEPSPQRTPVIYQAGMSERGREFAAKHAECVFLGGKDVETLKFFVDDIRKRAKKYGRNPDHIKMFAGICVIVGKTHDEAMEKLNSFQKYWSLEGHLAHYGGGTGYDLSKYSSNDYIGSISVGEIINNMSKLDGKWFKLSVGTPKKVADEMQYLVEEAGIDGFNLVQYVSPGTFVDFIELVVPELQKRGLYRVDYEEGTYREKLFGKGNYRLPDDHIAARYRNISSNV.

Residues aspartate 58, 137–138, tyrosine 158, and 227–230 each bind FMN; these read SH and AGMS.

Belongs to the NtaA/SnaA/DszA monooxygenase family. As to quaternary structure, homodimer.

It localises to the secreted. It catalyses the reaction a long-chain alkane + FMNH2 + O2 = a long chain fatty alcohol + FMN + H2O + H(+). In terms of biological role, involved in the degradation of long-chain alkanes. Converts alkanes ranging from C(15) to C(36) into their corresponding primary alcohols. This chain is Long-chain alkane monooxygenase, found in Geobacillus thermodenitrificans (strain NG80-2).